The sequence spans 202 residues: Small ribosomal subunit protein uS4 (202 aa).

The disordered stretch occupies residues 15-42 (LGDLPGLTRKAAKRSYPPGQHGQARRKR). Residues 90–152 (SRLDNICFRL…KGSKQLAEGN (63 aa)) form the S4 RNA-binding domain.

The protein belongs to the universal ribosomal protein uS4 family. In terms of assembly, part of the 30S ribosomal subunit. Contacts protein S5. The interaction surface between S4 and S5 is involved in control of translational fidelity.

Its function is as follows. One of the primary rRNA binding proteins, it binds directly to 16S rRNA where it nucleates assembly of the body of the 30S subunit. With S5 and S12 plays an important role in translational accuracy. The polypeptide is Small ribosomal subunit protein uS4 (Synechococcus sp. (strain CC9902)).